A 76-amino-acid chain; its full sequence is ATP synthase subunit 9, mitochondrial (76 aa).

At Met1 the chain carries N-formylmethionine. The next 2 helical transmembrane spans lie at 14–34 and 52–72; these read LASI…AALI and ILGF…AFLL.

As to quaternary structure, F-type ATP synthases have 2 components, the catalytic core F(1) and the membrane-embedded component F(0), linked together by a central stalk and a peripheral stalk. The central stalk, also called rotor shaft, is often seen as part of F(1). The peripheral stalk is seen as part of F(0). F(0) contains the membrane channel next to the rotor. F-type ATP synthases form dimers but each monomer functions independently in ATP generation. The dimer consists of 17 different polypeptides: ATP1 (subunit alpha, 3 molecules per monomer, part of F(1)), ATP2 (subunit beta, 3 copies per monomer, part of F(1)), ATP3 (subunit gamma, part of the central stalk), ATP4 (subunit b, part of the peripheral stalk), ATP5/OSCP (subunit 5/OSCP, part of the peripheral stalk), ATP6 (subunit a, part of the peripheral stalk), ATP7 (subunit d, part of the peripheral stalk), ATP8 (subunit 8, part of the peripheral stalk), OLI1 (subunit c, part of the rotor, 10 molecules per monomer), ATP14 (subunit h, part of the peripheral stalk), ATP15 (subunit epsilon, part of the central stalk), ATP16 (subunit delta, part of the central stalk), ATP17 (subunit f, part of the peripheral stalk), ATP18 (subunit i/j, part of the peripheral stalk), ATP19 (subunit k, dimer-specific, at interface between monomers), ATP20 (subunit g, at interface between monomers), TIM11 (subunit e, at interface between monomers).

The protein localises to the mitochondrion inner membrane. In terms of biological role, mitochondrial membrane ATP synthase (F(1)F(0) ATP synthase or Complex V) produces ATP from ADP in the presence of a proton gradient across the membrane which is generated by electron transport complexes of the respiratory chain. F-type ATP synthases consist of two structural domains, F(1) - containing the extramembraneous catalytic core, and F(0) - containing the membrane proton channel, linked together by a central stalk and a peripheral stalk. During catalysis, ATP synthesis in the catalytic domain of F(1) is coupled via a rotary mechanism of the central stalk subunits to proton translocation. Part of the complex F(0) domain. A homomeric c-ring of 10 OLI1/ATP9 subunits is part of the complex rotary element. The protein is ATP synthase subunit 9, mitochondrial of Yarrowia lipolytica (strain CLIB 122 / E 150) (Yeast).